A 1334-amino-acid polypeptide reads, in one-letter code: DNA-directed RNA polymerase subunit beta' (1334 aa).

Residues cysteine 213, cysteine 284, cysteine 291, and cysteine 294 each coordinate Zn(2+). A compositionally biased stretch (low complexity) spans 1299–1308 (SSRGSSRFSR). Residues 1299–1334 (SSRGSSRFSRQPISDRWSEADEEGEEDDFEEDYEEE) form a disordered region. Over residues 1318 to 1334 (ADEEGEEDDFEEDYEEE) the composition is skewed to acidic residues.

Belongs to the RNA polymerase beta' chain family. RpoC2 subfamily. As to quaternary structure, in cyanobacteria the RNAP catalytic core is composed of 2 alpha, 1 beta, 1 beta', 1 gamma and 1 omega subunit. When a sigma factor is associated with the core the holoenzyme is formed, which can initiate transcription. The cofactor is Zn(2+).

The enzyme catalyses RNA(n) + a ribonucleoside 5'-triphosphate = RNA(n+1) + diphosphate. Functionally, DNA-dependent RNA polymerase catalyzes the transcription of DNA into RNA using the four ribonucleoside triphosphates as substrates. The polypeptide is DNA-directed RNA polymerase subunit beta' (Microcystis aeruginosa (strain NIES-843 / IAM M-2473)).